The sequence spans 192 residues: Small ribosomal subunit protein bS16 (192 aa).

Residues 149 to 161 are compositionally biased toward basic and acidic residues; sequence EKKAAEAKAKAEA. The disordered stretch occupies residues 149–192; sequence EKKAAEAKAKAEAEAAAAAEEATETEETPMEAAAEEAPAAESAE. Low complexity predominate over residues 178–192; the sequence is MEAAAEEAPAAESAE.

The protein belongs to the bacterial ribosomal protein bS16 family.

The sequence is that of Small ribosomal subunit protein bS16 from Porphyromonas gingivalis (strain ATCC 33277 / DSM 20709 / CIP 103683 / JCM 12257 / NCTC 11834 / 2561).